A 354-amino-acid polypeptide reads, in one-letter code: Probable L-ascorbate-6-phosphate lactonase UlaG (354 aa).

Belongs to the UlaG family. A divalent metal cation serves as cofactor.

It is found in the cytoplasm. It catalyses the reaction L-ascorbate 6-phosphate + H2O = 3-dehydro-L-gulonate 6-phosphate. It functions in the pathway cofactor degradation; L-ascorbate degradation; D-xylulose 5-phosphate from L-ascorbate: step 1/4. Probably catalyzes the hydrolysis of L-ascorbate-6-P into 3-keto-L-gulonate-6-P. Is essential for L-ascorbate utilization under anaerobic conditions. The chain is Probable L-ascorbate-6-phosphate lactonase UlaG from Shigella flexneri.